The sequence spans 739 residues: Vascular cell adhesion protein 1 (739 aa).

The first 24 residues, Met-1–Ala-24, serve as a signal peptide directing secretion. Ig-like C2-type domains lie at Ser-25–Glu-105, Gln-109–Glu-212, Pro-223–Gln-309, Pro-312–Asp-399, Glu-408–Tyr-506, Pro-511–Ile-595, and Pro-600–Asp-684. Topologically, residues Ser-25–Glu-698 are extracellular. Intrachain disulfides connect Cys-47–Cys-95, Cys-52–Cys-99, Cys-137–Cys-195, Cys-246–Cys-291, and Cys-335–Cys-383. Asn-76 and Asn-77 each carry an N-linked (GlcNAc...) asparagine glycan. A glycan (N-linked (GlcNAc...) asparagine) is linked at Asn-273. N-linked (GlcNAc...) asparagine glycosylation is present at Asn-531. A disulfide bridge links Cys-534 with Cys-579. The chain crosses the membrane as a helical span at residues Leu-699–Ala-720. Residues Arg-721–Val-739 lie on the Cytoplasmic side of the membrane.

In terms of processing, cleaved by the metalloproteinase ADAM17 to generate the soluble form. Sialoglycoprotein. Post-translationally, ubiquitinated by TRIM65 via 'Lys-48'-linked ubiquitination; leading to proteasomal degradation.

Its subcellular location is the cell membrane. The protein localises to the secreted. Functionally, cell adhesion glycoprotein predominantly expressed on the surface of endothelial cells that plays an important role in immune surveillance and inflammation. Acts as a major regulator of leukocyte adhesion to the endothelium through interaction with different types of integrins. During inflammatory responses, binds ligands on the surface of activated endothelial cells to initiate the activation of calcium channels and the plasma membrane-associated small GTPase RAC1 leading to leukocyte transendothelial migration. Also serves as a quality-control checkpoint for entry into bone marrow by providing a 'don't-eat-me' stamping in the context of major histocompatibility complex (MHC) class-I presentation. This chain is Vascular cell adhesion protein 1 (VCAM1), found in Canis lupus familiaris (Dog).